We begin with the raw amino-acid sequence, 367 residues long: Glutamate 5-kinase (367 aa).

Position 10 (K10) interacts with ATP. Residues S50, D137, and N149 each coordinate substrate. Residues 169–170 (TD) and 211–217 (TGGMETK) each bind ATP. Residues 275-353 (AGDITVDDGA…QDISDILGYE (79 aa)) form the PUA domain.

Belongs to the glutamate 5-kinase family.

It is found in the cytoplasm. The catalysed reaction is L-glutamate + ATP = L-glutamyl 5-phosphate + ADP. The protein operates within amino-acid biosynthesis; L-proline biosynthesis; L-glutamate 5-semialdehyde from L-glutamate: step 1/2. Its function is as follows. Catalyzes the transfer of a phosphate group to glutamate to form L-glutamate 5-phosphate. This Sodalis glossinidius (strain morsitans) protein is Glutamate 5-kinase.